The chain runs to 456 residues: tRNA modification GTPase MnmE (456 aa).

(6S)-5-formyl-5,6,7,8-tetrahydrofolate-binding residues include arginine 24, glutamate 81, and lysine 120. The TrmE-type G domain occupies 216–379 (GMTVVIAGRP…LRDHLKACMG (164 aa)). Asparagine 226 contributes to the K(+) binding site. GTP contacts are provided by residues 226-231 (NAGKSS), 245-251 (TEIAGTT), 270-273 (DTAG), and 335-338 (NKAD). A Mg(2+)-binding site is contributed by serine 230. The K(+) site is built by threonine 245, isoleucine 247, and threonine 250. Threonine 251 contacts Mg(2+). Lysine 456 contacts (6S)-5-formyl-5,6,7,8-tetrahydrofolate.

This sequence belongs to the TRAFAC class TrmE-Era-EngA-EngB-Septin-like GTPase superfamily. TrmE GTPase family. In terms of assembly, homodimer. Heterotetramer of two MnmE and two MnmG subunits. K(+) serves as cofactor.

It localises to the cytoplasm. Exhibits a very high intrinsic GTPase hydrolysis rate. Involved in the addition of a carboxymethylaminomethyl (cmnm) group at the wobble position (U34) of certain tRNAs, forming tRNA-cmnm(5)s(2)U34. The sequence is that of tRNA modification GTPase MnmE from Pseudomonas fluorescens (strain Pf0-1).